A 429-amino-acid chain; its full sequence is Keratin, type I cytoskeletal 20 (429 aa).

The interval 1–26 is disordered; that stretch reads MDFSRRSFHRSLSSSSQGPALSTSGS. Positions 1–74 are head; that stretch reads MDFSRRSFHR…SNGGDLFGGN (74 aa). Low complexity predominate over residues 10–26; sequence RSLSSSSQGPALSTSGS. A phosphoserine mark is found at Ser13, Ser16, and Ser26. A coil 1A region spans residues 75-110; that stretch reads EKLAMQNLNDRLASYLEKVRSLEQSNSKLEAQIKQW. In terms of domain architecture, IF rod spans 75-386; it reads EKLAMQNLND…RLLEGEDIKT (312 aa). Positions 111–128 are linker 1; it reads YETNAPSTIRDYSSYYAQ. The coil 1B stretch occupies residues 129–220; the sequence is IKELQDQIKD…KEHQEEVEVL (92 aa). Residues 221 to 243 are linker 12; the sequence is RRQLGNNVNVEVDAAPGLNLGEI. The tract at residues 244–382 is coil 2; it reads MNEMRQKYEI…ATYRRLLEGE (139 aa). The interval 383 to 429 is tail; that stretch reads DIKTTEYQLNTLEAKDIKKTRKIKTVVEEVVDGKVVSSEVKEIEENI.

The protein belongs to the intermediate filament family. In terms of assembly, heterotetramer of two type I and two type II keratins. Associates with KRT8. Hyperphosphorylation at Ser-13 occurs during the early stages of apoptosis but becomes less prominent during the later stages. Phosphorylation at Ser-13 also increases in response to stress brought on by cell injury. Post-translationally, proteolytically cleaved by caspases during apoptosis. Cleavage occurs at Asp-233. In terms of tissue distribution, expressed predominantly in the intestinal epithelium in differentiated villus cells.

Plays a significant role in maintaining keratin filament organization in intestinal epithelia. When phosphorylated, plays a role in the secretion of mucin in the small intestine. This is Keratin, type I cytoskeletal 20 (Krt20) from Rattus norvegicus (Rat).